The chain runs to 140 residues: Low calcium response locus protein T (140 aa).

The sequence is that of Low calcium response locus protein T (lcrT) from Yersinia pestis.